A 187-amino-acid polypeptide reads, in one-letter code: dITP/XTP pyrophosphatase (187 aa).

Residue 7 to 12 (TNNPYK) coordinates substrate. Residues E36 and D65 each coordinate Mg(2+). The Proton acceptor role is filled by D65. Substrate-binding positions include T66, 140 to 143 (FGYD), K163, and 168 to 169 (HR).

It belongs to the HAM1 NTPase family. As to quaternary structure, homodimer. Requires Mg(2+) as cofactor.

The enzyme catalyses XTP + H2O = XMP + diphosphate + H(+). The catalysed reaction is dITP + H2O = dIMP + diphosphate + H(+). It catalyses the reaction ITP + H2O = IMP + diphosphate + H(+). Its function is as follows. Pyrophosphatase that catalyzes the hydrolysis of nucleoside triphosphates to their monophosphate derivatives, with a high preference for the non-canonical purine nucleotides XTP (xanthosine triphosphate), dITP (deoxyinosine triphosphate) and ITP. Seems to function as a house-cleaning enzyme that removes non-canonical purine nucleotides from the nucleotide pool, thus preventing their incorporation into DNA/RNA and avoiding chromosomal lesions. In Pyrobaculum aerophilum (strain ATCC 51768 / DSM 7523 / JCM 9630 / CIP 104966 / NBRC 100827 / IM2), this protein is dITP/XTP pyrophosphatase.